Reading from the N-terminus, the 162-residue chain is Large ribosomal subunit protein uL15 (162 aa).

Residues 1–18 (MKLNEIRDNEGATKDRMR) are compositionally biased toward basic and acidic residues. Residues 1–42 (MKLNEIRDNEGATKDRMRVGRGIGSGKGKTAGRGVKGQKART) form a disordered region. A compositionally biased stretch (gly residues) spans 21 to 35 (RGIGSGKGKTAGRGV).

This sequence belongs to the universal ribosomal protein uL15 family. In terms of assembly, part of the 50S ribosomal subunit.

In terms of biological role, binds to the 23S rRNA. This chain is Large ribosomal subunit protein uL15, found in Methylobacterium sp. (strain 4-46).